Here is a 214-residue protein sequence, read N- to C-terminus: Putative 3-methyladenine DNA glycosylase (214 aa).

This sequence belongs to the DNA glycosylase MPG family.

The polypeptide is Putative 3-methyladenine DNA glycosylase (Mycobacterium leprae (strain Br4923)).